A 216-amino-acid polypeptide reads, in one-letter code: Ras-related protein RABE1d (216 aa).

22 to 29 (GDSGVGKS) serves as a coordination point for GTP. Residues 44-52 (FITTIGIDF) carry the Effector region motif. GTP-binding positions include 70 to 74 (DTAGQ), 128 to 131 (NKAD), and 159 to 160 (SA). The interval 196–216 (TKQDTAASSSTAEKSACCSYV) is disordered. A compositionally biased stretch (low complexity) spans 200–216 (TAASSSTAEKSACCSYV). Residues Cys-212 and Cys-213 are each lipidated (S-geranylgeranyl cysteine).

It belongs to the small GTPase superfamily. Rab family. Interacts with PI5K2.

The protein localises to the golgi apparatus membrane. It localises to the cell membrane. Its function is as follows. Involved in membrane trafficking from the Golgi to the plasma membrane. This chain is Ras-related protein RABE1d (RABE1D), found in Arabidopsis thaliana (Mouse-ear cress).